A 127-amino-acid chain; its full sequence is Large ribosomal subunit protein bL17 (127 aa).

The protein belongs to the bacterial ribosomal protein bL17 family. Part of the 50S ribosomal subunit. Contacts protein L32.

The polypeptide is Large ribosomal subunit protein bL17 (Lactiplantibacillus plantarum (strain ATCC BAA-793 / NCIMB 8826 / WCFS1) (Lactobacillus plantarum)).